A 529-amino-acid polypeptide reads, in one-letter code: MGEVERTRQSSSSLLTFKRKRALEACDSCRKQKTRCLAGSVEDENRACLRCRSLNMDCSLADPNHFIRKVENDNMDAISANINSKLENRLKVLEKAISSITNSPIAGQISLKSEKDVFLQGLLSMDEIELLLEIFIERYGKRWLSVDYSASQYMELLYTKSHLMLATACLIALRHNPSLKARIYTDVLNIVDRLISEELLTTSPSLQFFEAVSMLTLYRPLRLSQKQDLWLLSGFALQHRTLSSTKGWFNGFAGSSATLTYLDIVPARTWNHLCHGHLVMCMGYRRHAMLDENTFDDCRNILTNTKANEFDGNILGMLSVYSMLYRMLRSPTLDLDYAIFQLEEWRKEWCHLWEQPEPQYSRIAYFYSYNVVYEASIQTATDGNDFANIPRYVSMVQSYALKTIDAIFELSAYDMSRCSDHVLFHAGFASASLLRLIYAAKTKEVDTSIVQPKVLNDLVTKIWKWLLVISVDQYHLATKFANYLKEYQKTVNEGTAESTWFKGPLRPVSSTTLQALKPYNLGVATVERG.

Residues 26-58 constitute a DNA-binding region (zn(2)-C6 fungal-type); sequence CDSCRKQKTRCLAGSVEDENRACLRCRSLNMDC.

It localises to the nucleus. This is an uncharacterized protein from Schizosaccharomyces pombe (strain 972 / ATCC 24843) (Fission yeast).